The primary structure comprises 377 residues: uncharacterized protein (377 aa).

2 stretches are compositionally biased toward polar residues: residues 1 to 11 (MSSIQGTSGSS) and 31 to 43 (PSGQTISFSAVGK). 3 disordered regions span residues 1 to 43 (MSSI…AVGK), 109 to 141 (SSEEQLESPGVRNKSALKGTNRSNSHREEIARN), and 328 to 377 (SSSP…RGFQ). Over residues 334–345 (EDPRSLRDRLRD) the composition is skewed to basic and acidic residues.

Belongs to the chlamydial CPn_0499/CT_392/TC_0671 family.

This is an uncharacterized protein from Chlamydia trachomatis serovar D (strain ATCC VR-885 / DSM 19411 / UW-3/Cx).